The sequence spans 829 residues: ATP-dependent RNA helicase drs1 (829 aa).

Disordered regions lie at residues 1–96 and 145–295; these read MAPS…MDTE and RRER…MSSF. Over residues 20–32 the composition is skewed to acidic residues; it reads DNEEDIPLEEEQE. The span at 48–59 shows a compositional bias: basic residues; it reads KQKKKNNKKSKK. Acidic residues predominate over residues 63–78; it reads TEDDDDEAETKEDDAA. Over residues 150–163 the composition is skewed to basic and acidic residues; it reads AAKEGKTTATKEEE. Composition is skewed to acidic residues over residues 164 to 190, 218 to 228, 235 to 246, and 258 to 271; these read DKME…DGVL, DGEDEDSEGED, DEDEGDASDDDS, and QSSD…EEEE. Residues 272–291 are compositionally biased toward basic and acidic residues; it reads AKMKEFFAPEEENQPKKKGE. A Q motif motif is present at residues 293 to 321; sequence SSFQEMSLSRPILRGLTSVGFTKPTPIQA. Residues 324-498 enclose the Helicase ATP-binding domain; the sequence is IPISLMGKDV…RAGLNKPVRI (175 aa). 337 to 344 lines the ATP pocket; that stretch reads AVTGSGKT. A DEAD box motif is present at residues 446-449; the sequence is DEAD. In terms of domain architecture, Helicase C-terminal spans 528-707; that stretch reads YLLHICKTIY…EKQLQNMEMQ (180 aa). Residues 728–829 form a disordered region; the sequence is TWFETQEDKK…KGGKGKGRRK (102 aa). The segment covering 749–791 has biased composition (basic and acidic residues); that stretch reads GVRDKLKSKNEGKLSNKDRKKLDTMQERKQERTYKKGSAERAG. A compositionally biased stretch (basic residues) spans 800–815; that stretch reads KVVKKVGRSAGPKKKG.

It belongs to the DEAD box helicase family. DDX27/DRS1 subfamily. As to quaternary structure, associates with pre-ribosomal particles.

It is found in the nucleus. The protein localises to the nucleolus. It carries out the reaction ATP + H2O = ADP + phosphate + H(+). Its function is as follows. ATP-binding RNA helicase involved in ribosome assembly. The chain is ATP-dependent RNA helicase drs1 (drh-11) from Neurospora crassa (strain ATCC 24698 / 74-OR23-1A / CBS 708.71 / DSM 1257 / FGSC 987).